Consider the following 116-residue polypeptide: MTRAAAEARGRRAERRAAWWLRLHGWRIVGQRLRVPVGEVDLVARRGRTVAFIEVKWRDRAADLDLAIDPYRLRRVAAAAEMLAPRFARPYDDIRIDVMLLAPRRLPRHLVHVWQP.

Belongs to the UPF0102 family.

This chain is UPF0102 protein Sala_0262, found in Sphingopyxis alaskensis (strain DSM 13593 / LMG 18877 / RB2256) (Sphingomonas alaskensis).